Consider the following 428-residue polypeptide: 3-phosphoshikimate 1-carboxyvinyltransferase (428 aa).

Residues Lys-19, Ser-20, and Arg-24 each coordinate 3-phosphoshikimate. Lys-19 is a binding site for phosphoenolpyruvate. Phosphoenolpyruvate is bound by residues Gly-91 and Arg-119. 3-phosphoshikimate contacts are provided by Ser-164, Gln-166, Asp-312, and Lys-339. A phosphoenolpyruvate-binding site is contributed by Gln-166. The Proton acceptor role is filled by Asp-312. The phosphoenolpyruvate site is built by Arg-343 and Arg-386.

It belongs to the EPSP synthase family. As to quaternary structure, monomer.

It is found in the cytoplasm. The enzyme catalyses 3-phosphoshikimate + phosphoenolpyruvate = 5-O-(1-carboxyvinyl)-3-phosphoshikimate + phosphate. Its pathway is metabolic intermediate biosynthesis; chorismate biosynthesis; chorismate from D-erythrose 4-phosphate and phosphoenolpyruvate: step 6/7. Catalyzes the transfer of the enolpyruvyl moiety of phosphoenolpyruvate (PEP) to the 5-hydroxyl of shikimate-3-phosphate (S3P) to produce enolpyruvyl shikimate-3-phosphate and inorganic phosphate. This chain is 3-phosphoshikimate 1-carboxyvinyltransferase, found in Bacillus licheniformis (strain ATCC 14580 / DSM 13 / JCM 2505 / CCUG 7422 / NBRC 12200 / NCIMB 9375 / NCTC 10341 / NRRL NRS-1264 / Gibson 46).